The primary structure comprises 928 residues: Mating-type protein A-alpha Y4 (928 aa).

Positions 152–211 (GKRSRPKFHSEYTPVLELYFHFNAYPTYADRRILAEKTGMLTRQITVWFQNHRRRAKGPL) form a DNA-binding region, homeobox. Disordered stretches follow at residues 255 to 296 (KSLA…EAGP), 310 to 329 (DSVSKKKSKKAKKEKASQQN), 340 to 359 (TATKEKRRKMKKLPRAAGQP), 406 to 451 (YAYV…HRVS), and 626 to 736 (ARRK…EQDL). Over residues 344–353 (EKRRKMKKLP) the composition is skewed to basic residues. Positions 635 to 657 (KALEEKQAKKDRKERQKASRSQR) are enriched in basic and acidic residues. Composition is skewed to low complexity over residues 668-682 (SRASSVASTSSLPAR) and 694-728 (ESAASSRATSVASSVRTPSLSSTSSRRSSGMSMPG).

It localises to the nucleus. Specifies A-alpha-4 mating-type. May regulate the expression of genes specific to the homokaryotic cell type. The sequence is that of Mating-type protein A-alpha Y4 from Schizophyllum commune (Split gill fungus).